A 1009-amino-acid chain; its full sequence is Probable beta-galactosidase B (1009 aa).

The N-terminal stretch at 1 to 27 (MKTIAGLSWISALSSLASLPNGLGVSA) is a signal peptide. A substrate-binding site is contributed by tyrosine 96. Asparagine 106 is a glycosylation site (N-linked (GlcNAc...) asparagine). 4 residues coordinate substrate: asparagine 141, alanine 142, glutamate 143, and asparagine 201. Residue glutamate 202 is the Proton donor of the active site. Residue tyrosine 271 coordinates substrate. A disulfide bridge connects residues cysteine 277 and cysteine 330. Catalysis depends on glutamate 314, which acts as the Nucleophile. Tyrosine 379 contacts substrate. N-linked (GlcNAc...) asparagine glycans are attached at residues asparagine 467, asparagine 495, asparagine 547, asparagine 593, asparagine 632, asparagine 672, asparagine 707, asparagine 775, asparagine 782, asparagine 789, asparagine 795, and asparagine 914.

The protein belongs to the glycosyl hydrolase 35 family.

The protein resides in the secreted. The enzyme catalyses Hydrolysis of terminal non-reducing beta-D-galactose residues in beta-D-galactosides.. In terms of biological role, cleaves beta-linked terminal galactosyl residues from gangliosides, glycoproteins, and glycosaminoglycans. This is Probable beta-galactosidase B (lacB) from Pyrenophora tritici-repentis (strain Pt-1C-BFP) (Wheat tan spot fungus).